The sequence spans 573 residues: Globulin-1 S allele (573 aa).

Positions 1–18 form a signal peptide, or 21; it reads MVSARIVVLLAVLLCAAA. A propeptide spanning residues 19-86 is cleaved from the precursor; sequence AVASSWEDDN…DRSGEGSSED (68 aa). Positions 65 to 102 are disordered; it reads EKRQERSRHEADDRSGEGSSEDEREREQEKEEKQKDRR. 2 consecutive Cupin type-1 domains span residues 104–262 and 311–493; these read YVFD…DRLE and YSLL…EEVD. The segment at 288–315 is disordered; the sequence is RHASEGGHGPHWPLPPFGESRGPYSLLD. An N-linked (GlcNAc...) asparagine glycan is attached at Asn349. 2 disordered regions span residues 382–416 and 498–573; these read PHRQSQGGESERERGKGRRSEEEEESSEEQEEVGQ and SRRE…TARM. Basic and acidic residues predominate over residues 390–402; sequence ESERERGKGRRSE. The span at 403–413 shows a compositional bias: acidic residues; that stretch reads EEEESSEEQEE. Composition is skewed to basic and acidic residues over residues 525–542 and 549–561; these read EERHGGRGERERHGREER and REGRHGRGRREEV.

Belongs to the 7S seed storage protein family. Post-translationally, three protein-processing steps occur in the formation of the mature protein from the primary translation product.

This chain is Globulin-1 S allele (GLB1), found in Zea mays (Maize).